Reading from the N-terminus, the 217-residue chain is Urease accessory protein UreG (217 aa).

Position 13 to 20 (13 to 20 (GPVGSGKT)) interacts with GTP.

Belongs to the SIMIBI class G3E GTPase family. UreG subfamily. Homodimer. UreD, UreF and UreG form a complex that acts as a GTP-hydrolysis-dependent molecular chaperone, activating the urease apoprotein by helping to assemble the nickel containing metallocenter of UreC. The UreE protein probably delivers the nickel.

The protein resides in the cytoplasm. In terms of biological role, facilitates the functional incorporation of the urease nickel metallocenter. This process requires GTP hydrolysis, probably effectuated by UreG. This chain is Urease accessory protein UreG, found in Frankia alni (strain DSM 45986 / CECT 9034 / ACN14a).